A 420-amino-acid polypeptide reads, in one-letter code: POU domain, class 4, transcription factor 1 (420 aa).

Positions 57 to 66 match the POU-IV box motif; sequence RAEALAAVDI. 2 disordered regions span residues 94-117 and 132-200; these read STVPLAHHHHHHHHHQALEPGDLL and GGAG…XGHL. The span at 99–108 shows a compositional bias: basic residues; the sequence is AHHHHHHHHH. 2 stretches are compositionally biased toward gly residues: residues 132-165 and 172-184; these read GGAGAAGGGGAPTRPRGAGGPGGGGGPGGGGPGV and PGGGGGGPGGGLL. Residues 261 to 338 enclose the POU-specific domain; it reads DSDTDPRELE…ILQAWLEEAE (78 aa). A DNA-binding region (homeobox) is located at residues 356–415; it reads KKRKRTSIAAPEKRSLEAYFAVQPRPSSEKIAAIAEKLDLKKNVVRVWFCNQRQKQKRMK.

The protein belongs to the POU transcription factor family. Class-4 subfamily. Interacts (via N-terminus) with RIT2; the interaction controls POU4F1 transactivation activity on some neuronal target genes. Isoform 1 interacts with POU4F2; this interaction inhibits both POU4F1 DNA-binding and transcriptional activities. Isoform 1 interacts (C-terminus) with ESR1 (via DNA-binding domain); this interaction decreases the estrogen receptor ESR1 transcriptional activity in a DNA- and ligand 17-beta-estradiol-independent manner. As to expression, detected in brain, spinal cord and dorsal root ganglion. Isoform 2 is detected in brain, spinal cord, dorsal root ganglion and spleen.

It localises to the nucleus. Its subcellular location is the cytoplasm. Its function is as follows. Multifunctional transcription factor with different regions mediating its different effects. Acts by binding (via its C-terminal domain) to sequences related to the consensus octamer motif 5'-ATGCAAAT-3' in the regulatory regions of its target genes. Regulates the expression of specific genes involved in differentiation and survival within a subset of neuronal lineages. It has been shown that activation of some of these genes requires its N-terminal domain, maybe through a neuronal-specific cofactor. Activates BCL2 expression and protects neuronal cells from apoptosis (via the N-terminal domain). Induces neuronal process outgrowth and the coordinate expression of genes encoding synaptic proteins. Exerts its major developmental effects in somatosensory neurons and in brainstem nuclei involved in motor control. Stimulates the binding affinity of the nuclear estrogene receptor ESR1 to DNA estrogen response element (ERE), and hence modulates ESR1-induced transcriptional activity. May positively regulate POU4F2 and POU4F3. Regulates dorsal root ganglion sensory neuron specification and axonal projection into the spinal cord. Plays a role in TNFSF11-mediated terminal osteoclast differentiation. Negatively regulates its own expression interacting directly with a highly conserved autoregulatory domain surrounding the transcription initiation site. Functionally, able to act as transcription factor, cannot regulate the expression of the same subset of genes than isoform 1. Does not have anitapoptotic effect on neuronal cells. The protein is POU domain, class 4, transcription factor 1 (Pou4f1) of Rattus norvegicus (Rat).